The primary structure comprises 222 residues: MVTPSQHALLAEGVAHLTDARTAPALCALLKQYLEELILFNTRAHLVHVTHTEELITHHLLDSLSAWPHFTNARAIADIGSGAGLPGIPLACALALYAPETELTLIERREKRIAFLENACARLALPHLRIVHADAHDLTPYTYDAITFRALCPLNHPTVYMLLNKLRPGGVILAYKGKRKLIEQETRDFLPQSCSVFPLHVPFLHEARHLVAIHTPCAAPPQ.

Residues G80, L85, and R149 each contribute to the S-adenosyl-L-methionine site.

It belongs to the methyltransferase superfamily. RNA methyltransferase RsmG family.

It is found in the cytoplasm. Its function is as follows. Specifically methylates the N7 position of a guanine in 16S rRNA. The protein is Ribosomal RNA small subunit methyltransferase G of Treponema pallidum (strain Nichols).